Reading from the N-terminus, the 213-residue chain is 3,4-dihydroxy-2-butanone 4-phosphate synthase (213 aa).

D-ribulose 5-phosphate is bound by residues 27–28, D32, 140–144, and E164; these read RE and RTGHT. E28 contributes to the Mg(2+) binding site. H143 is a Mg(2+) binding site.

The protein belongs to the DHBP synthase family. Homodimer. Requires Mg(2+) as cofactor. It depends on Mn(2+) as a cofactor.

It catalyses the reaction D-ribulose 5-phosphate = (2S)-2-hydroxy-3-oxobutyl phosphate + formate + H(+). The protein operates within cofactor biosynthesis; riboflavin biosynthesis; 2-hydroxy-3-oxobutyl phosphate from D-ribulose 5-phosphate: step 1/1. Functionally, catalyzes the conversion of D-ribulose 5-phosphate to formate and 3,4-dihydroxy-2-butanone 4-phosphate. The polypeptide is 3,4-dihydroxy-2-butanone 4-phosphate synthase (Agrobacterium fabrum (strain C58 / ATCC 33970) (Agrobacterium tumefaciens (strain C58))).